The sequence spans 152 residues: 3-hydroxyacyl-[acyl-carrier-protein] dehydratase FabZ (152 aa).

The active site involves H58.

Belongs to the thioester dehydratase family. FabZ subfamily.

It is found in the cytoplasm. The catalysed reaction is a (3R)-hydroxyacyl-[ACP] = a (2E)-enoyl-[ACP] + H2O. Involved in unsaturated fatty acids biosynthesis. Catalyzes the dehydration of short chain beta-hydroxyacyl-ACPs and long chain saturated and unsaturated beta-hydroxyacyl-ACPs. This chain is 3-hydroxyacyl-[acyl-carrier-protein] dehydratase FabZ, found in Prochlorococcus marinus (strain MIT 9301).